Here is a 485-residue protein sequence, read N- to C-terminus: ATP synthase subunit beta (485 aa).

The tract at residues 1 to 20 is disordered; the sequence is MSTTKTTKMTVKTGSKGTSG. An ATP-binding site is contributed by 170 to 177; that stretch reads GGAGVGKT.

Belongs to the ATPase alpha/beta chains family. As to quaternary structure, F-type ATPases have 2 components, CF(1) - the catalytic core - and CF(0) - the membrane proton channel. CF(1) has five subunits: alpha(3), beta(3), gamma(1), delta(1), epsilon(1). CF(0) has three main subunits: a(1), b(2) and c(9-12). The alpha and beta chains form an alternating ring which encloses part of the gamma chain. CF(1) is attached to CF(0) by a central stalk formed by the gamma and epsilon chains, while a peripheral stalk is formed by the delta and b chains.

It is found in the cell membrane. It carries out the reaction ATP + H2O + 4 H(+)(in) = ADP + phosphate + 5 H(+)(out). Its function is as follows. Produces ATP from ADP in the presence of a proton gradient across the membrane. The catalytic sites are hosted primarily by the beta subunits. The protein is ATP synthase subunit beta of Mycobacterium leprae (strain TN).